Reading from the N-terminus, the 51-residue chain is Zinc metalloproteinase-disintegrin-like crovidisin (51 aa).

In terms of domain architecture, Peptidase M12B spans 1–12; that stretch reads AMVTKNNGDLDK. The 6-residue stretch at 13 to 18 folds into the Disintegrin domain; it reads SGTECR. N-linked (GlcNAc...) asparagine glycosylation occurs at N29.

The protein belongs to the venom metalloproteinase (M12B) family. P-III subfamily. P-IIIa sub-subfamily. Monomer. The cofactor is Zn(2+). Expressed by the venom gland.

The protein localises to the secreted. Snake venom zinc metalloproteinase-disintegrin-like that blocks the interaction between platelets and collagen fibers through its binding to collagen fibers, resulting in the blockade of collagen-mediated platelet functions such as adhesion, release reaction, thromboxane formation, and aggregation. Binds selectively to collagen type I with high affinity. Also exerts proteolytic activity to matrix. This Crotalus viridis viridis (Prairie rattlesnake) protein is Zinc metalloproteinase-disintegrin-like crovidisin.